We begin with the raw amino-acid sequence, 78 residues long: MEFKEQVLDLLADVAENDVVKENPDVEIFEEGIIDSFQTVGLLLEIQNRLGIEVSIMDFDRDEWATPNKIVEALEELR.

The 78-residue stretch at 1-78 (MEFKEQVLDL…KIVEALEELR (78 aa)) folds into the Carrier domain. The residue at position 36 (S36) is an O-(pantetheine 4'-phosphoryl)serine.

It belongs to the DltC family. Post-translationally, 4'-phosphopantetheine is transferred from CoA to a specific serine of apo-DCP.

It is found in the cytoplasm. It functions in the pathway cell wall biogenesis; lipoteichoic acid biosynthesis. Carrier protein involved in the D-alanylation of lipoteichoic acid (LTA). The loading of thioester-linked D-alanine onto DltC is catalyzed by D-alanine--D-alanyl carrier protein ligase DltA. The DltC-carried D-alanyl group is further transferred to cell membrane phosphatidylglycerol (PG) by forming an ester bond, probably catalyzed by DltD. D-alanylation of LTA plays an important role in modulating the properties of the cell wall in Gram-positive bacteria, influencing the net charge of the cell wall. This is D-alanyl carrier protein from Staphylococcus haemolyticus (strain JCSC1435).